The primary structure comprises 748 residues: Phosphoenolpyruvate-dependent phosphotransferase system (748 aa).

In terms of domain architecture, GAF spans 1–127; that stretch reads MLTRLREIVE…RRQLLGVLVV (127 aa). The segment at 128–170 is linker; the sequence is QQRELRQYDESEESFLVTLATQMAAILSQSQLTALFGQYRQTR. Residues 171-748 are PTS EI; it reads IRALPAAPGV…GMGGLIRGGL (578 aa). Residue His-356 is the Tele-phosphohistidine intermediate of the active site. Phosphoenolpyruvate-binding residues include Arg-462 and Arg-498. Residues Glu-597 and Asp-621 each coordinate Mg(2+). Residues 620 to 621 and Arg-631 contribute to the phosphoenolpyruvate site; that span reads ND. Cys-668 serves as the catalytic Proton donor.

This sequence belongs to the PEP-utilizing enzyme family. It depends on Mg(2+) as a cofactor.

The protein resides in the cytoplasm. It carries out the reaction L-histidyl-[protein] + phosphoenolpyruvate = N(pros)-phospho-L-histidyl-[protein] + pyruvate. Inhibited by GDP and FAD. Functionally, component of the phosphoenolpyruvate-dependent nitrogen-metabolic phosphotransferase system (nitrogen-metabolic PTS), that seems to be involved in regulating nitrogen metabolism. Enzyme I-Ntr transfers the phosphoryl group from phosphoenolpyruvate (PEP) to the phosphoryl carrier protein (NPr). Could function in the transcriptional regulation of sigma-54 dependent operons in conjunction with the NPr (PtsO) and EIIA-Ntr (PtsN) proteins. Enzyme I-Ntr is specific for NPr. The chain is Phosphoenolpyruvate-dependent phosphotransferase system (ptsP) from Escherichia coli (strain K12).